Here is a 480-residue protein sequence, read N- to C-terminus: Coronin-2B (480 aa).

5 WD repeats span residues 85–125 (GHQG…LKRN), 135–177 (GHSR…KMID), 179–217 (HRDV…VLQE), 220–263 (CKTH…MPVT), and 265–308 (EEID…PYLT). Positions 436-475 (NELLRMFFRQQEEIRRLKEQLSQRDLLVRQLELELKNLRN) form a coiled coil.

The protein belongs to the WD repeat coronin family.

The protein localises to the cytoplasm. Its subcellular location is the cytoskeleton. May play a role in the reorganization of neuronal actin structure. The polypeptide is Coronin-2B (coro2b) (Xenopus tropicalis (Western clawed frog)).